A 1217-amino-acid polypeptide reads, in one-letter code: MTIPEKPQGVIWTDAQWQSIYETGQDVLVAAAAGSGKTAVLVERIIQKILRDGIDVDRLLVVTFTNLSAREMKHRVDQRIQEASIADPANAHLKNQRIKIHQAQISTLHSFCLKLIQQHYDVLNIDPNFRTSSEAENILLLEQTIDEVIEQHYDILDPAFIELTEQLSSDRSDDQFRMIIKQLYFFSVANPNPTNWLDQLVTPYEEEAQQAQLIQLLTDLSKVFITAAYDALNKAYDLFSMMDGVDKHLAVIEDERRLMGRVLEGGFIDISYLTGHEFGARLPNVTAKIKEANEMMVDALEDAKLQYKKYKSLIDKVKSDYFSREADDLKADMQQLAPRVKYLARIVKDVMSEFNRKKRSKNILDFSDYEHFALQILTNEDGSPSEIAESYRQHFHEILVDEYQDTNRVQEKILSCIKTGDEHNGNLFMVGDVKQSIYKFRQADPSLFIEKYQRFTLDGDGTGRRIDLSQNFRSRKEVLSTTNYIFKHMMDEQVGEVRYDEAAQLYYGAPYDESDHPVNLKVLVEADQEHSDLTGSEQEAHFIVEQVKDILEHQKVFDMKTGSYRSATYKDIVILERSFGQARNLQQAFKNEDIPFHVNSREGYFEQTEVRLVLSFLRAIDNPLQDIYLVGLMRSVIYQFKEDELAQIRILSPNDDYFYQSIVNYINDEAADAILVDKLKMFLSDIQSYQQYSKDHPVYQLIDKFYNDHYVIQYFSGLIGGRGRRANLYGLFNKAIEFENSSFRGLYQFIRFIDELIERGKDFGEENVVGPNDNVVRMMTIHSSKGLEFPFVIYSGLSKDFNKRDLKQPVILNQQFGLGMDYFDVDKEMAFPSLASVAYKAVAEKKLVSEEMRLVYVALTRAKEQLYLIGRVKNDKSLLELEQLSISGEHIAVNERLTSPNPFHLIYSILSKHQSASIPDDLKFEKDIAQIEDSSRPNVNISIIYFEDVSTETILDNDEYRSVNQLETMQNGNEDVKAQIKHQLDYQYPYVNDTKKPSKQSVSELKRQYETEESGTSYERVRQYRIGFSTYERPKFLSEQGKRKANEIGTLMHTVMQHLPFKKERISEVELHQYIDGLIDKHIIEADTKKDIRMDEIMTFINSELYSIIAEAEQVYRELPFVVNQALVDQLPQGDEDVSIIQGMIDLIFVKDGVHYFVDYKTDAFNRRRGMTDEEIGTQLKNKYKIQMKYYQNTLQTILNKEVKGYLYFFKFGTLQL.

One can recognise a UvrD-like helicase ATP-binding domain in the interval 10 to 475; the sequence is VIWTDAQWQS…IDLSQNFRSR (466 aa). 31-38 contributes to the ATP binding site; sequence AAAGSGKT. The region spanning 476 to 786 is the UvrD-like helicase C-terminal domain; the sequence is KEVLSTTNYI…RMMTIHSSKG (311 aa).

The protein belongs to the helicase family. AddA subfamily. In terms of assembly, heterodimer of AddA and AddB/RexB. The cofactor is Mg(2+).

The enzyme catalyses Couples ATP hydrolysis with the unwinding of duplex DNA by translocating in the 3'-5' direction.. It carries out the reaction ATP + H2O = ADP + phosphate + H(+). The heterodimer acts as both an ATP-dependent DNA helicase and an ATP-dependent, dual-direction single-stranded exonuclease. Recognizes the chi site generating a DNA molecule suitable for the initiation of homologous recombination. The AddA nuclease domain is required for chi fragment generation; this subunit has the helicase and 3' -&gt; 5' nuclease activities. The polypeptide is ATP-dependent helicase/nuclease subunit A (Staphylococcus aureus (strain MRSA252)).